Here is a 441-residue protein sequence, read N- to C-terminus: Aminopeptidase C (441 aa).

Active-site residues include C70, H361, and N382.

It belongs to the peptidase C1 family.

The catalysed reaction is Inactivates bleomycin B2 (a cytotoxic glycometallopeptide) by hydrolysis of a carboxyamide bond of beta-aminoalanine, but also shows general aminopeptidase activity. The specificity varies somewhat with source, but amino acid arylamides of Met, Leu and Ala are preferred.. The chain is Aminopeptidase C (pepC) from Listeria innocua serovar 6a (strain ATCC BAA-680 / CLIP 11262).